Reading from the N-terminus, the 202-residue chain is N-(5'-phosphoribosyl)anthranilate isomerase (202 aa).

It belongs to the TrpF family.

It catalyses the reaction N-(5-phospho-beta-D-ribosyl)anthranilate = 1-(2-carboxyphenylamino)-1-deoxy-D-ribulose 5-phosphate. It functions in the pathway amino-acid biosynthesis; L-tryptophan biosynthesis; L-tryptophan from chorismate: step 3/5. In Listeria welshimeri serovar 6b (strain ATCC 35897 / DSM 20650 / CCUG 15529 / CIP 8149 / NCTC 11857 / SLCC 5334 / V8), this protein is N-(5'-phosphoribosyl)anthranilate isomerase.